A 530-amino-acid polypeptide reads, in one-letter code: Bifunctional purine biosynthesis protein PurH (530 aa).

One can recognise an MGS-like domain in the interval 1-149; that stretch reads MASDFLPVHR…KNFARVAVAT (149 aa).

This sequence belongs to the PurH family.

The enzyme catalyses (6R)-10-formyltetrahydrofolate + 5-amino-1-(5-phospho-beta-D-ribosyl)imidazole-4-carboxamide = 5-formamido-1-(5-phospho-D-ribosyl)imidazole-4-carboxamide + (6S)-5,6,7,8-tetrahydrofolate. The catalysed reaction is IMP + H2O = 5-formamido-1-(5-phospho-D-ribosyl)imidazole-4-carboxamide. It participates in purine metabolism; IMP biosynthesis via de novo pathway; 5-formamido-1-(5-phospho-D-ribosyl)imidazole-4-carboxamide from 5-amino-1-(5-phospho-D-ribosyl)imidazole-4-carboxamide (10-formyl THF route): step 1/1. It functions in the pathway purine metabolism; IMP biosynthesis via de novo pathway; IMP from 5-formamido-1-(5-phospho-D-ribosyl)imidazole-4-carboxamide: step 1/1. The chain is Bifunctional purine biosynthesis protein PurH from Xylella fastidiosa (strain M12).